Consider the following 296-residue polypeptide: Giardin subunit alpha-4 (296 aa).

4 Annexin repeats span residues 3 to 72 (ATVS…VHAW), 74 to 146 (SRFE…GWVK), 153 to 223 (KSIK…AHHW), and 226 to 294 (DPGQ…VFWR).

It belongs to the annexin family. Giardin subunit alpha subfamily.

The protein localises to the cytoplasm. It localises to the cytoskeleton. Giardins are involved in parasite attachment to the intestinal mucosa and in the cytoskeletal disassembly and reassembly that marks the transition from infectious trophozoite to transmissible cyst. They may interact with other cytoskeletal proteins such as microtubules in the microribbons or crossbridges, to maintain the integrity of the ventral disk. This Giardia intestinalis (Giardia lamblia) protein is Giardin subunit alpha-4.